The primary structure comprises 369 residues: Phospho-N-acetylmuramoyl-pentapeptide-transferase (369 aa).

Helical transmembrane passes span 2-22 (IALLIGAGLALLCALVGTPLF), 55-75 (TVVVAAVLLSYGLTHLIMFLM), 86-106 (ALILLFLMVGMGLVGFLDDFI), 120-140 (AKLILQAAVGVIFAVLALNFP), 163-183 (LAFGGTVLGAILFVVWSNLIV), 196-216 (LDGLAAGASVMVFGAYTLMGI), 239-259 (PLDLALLAAIMSAALVGFLWW), 266-286 (IFMGDTGSLAIGGAIAGFAIL), 291-311 (LLLGIIGGLFVLITLSVIIQV), and 348-368 (ILGGLFVAVGLGIFYAEWVVL).

The protein belongs to the glycosyltransferase 4 family. MraY subfamily. Requires Mg(2+) as cofactor.

It localises to the cell membrane. The catalysed reaction is UDP-N-acetyl-alpha-D-muramoyl-L-alanyl-gamma-D-glutamyl-meso-2,6-diaminopimeloyl-D-alanyl-D-alanine + di-trans,octa-cis-undecaprenyl phosphate = di-trans,octa-cis-undecaprenyl diphospho-N-acetyl-alpha-D-muramoyl-L-alanyl-D-glutamyl-meso-2,6-diaminopimeloyl-D-alanyl-D-alanine + UMP. It participates in cell wall biogenesis; peptidoglycan biosynthesis. Its function is as follows. Catalyzes the initial step of the lipid cycle reactions in the biosynthesis of the cell wall peptidoglycan: transfers peptidoglycan precursor phospho-MurNAc-pentapeptide from UDP-MurNAc-pentapeptide onto the lipid carrier undecaprenyl phosphate, yielding undecaprenyl-pyrophosphoryl-MurNAc-pentapeptide, known as lipid I. In Pseudarthrobacter chlorophenolicus (strain ATCC 700700 / DSM 12829 / CIP 107037 / JCM 12360 / KCTC 9906 / NCIMB 13794 / A6) (Arthrobacter chlorophenolicus), this protein is Phospho-N-acetylmuramoyl-pentapeptide-transferase.